Reading from the N-terminus, the 211-residue chain is Cyclin-dependent kinase inhibitor 3 (211 aa).

The segment at 1 to 20 (MKPPISIQASEFDSSDEEPV) is disordered. Residues 1–34 (MKPPISIQASEFDSSDEEPVDEEQTPIQISWLPL) form an interaction with CDK2 region. The region spanning 32–200 (LPLSRVNCSQ…FRDKLAAYLS (169 aa)) is the Tyrosine-protein phosphatase domain. The active-site Phosphocysteine intermediate is Cys140.

This sequence belongs to the protein-tyrosine phosphatase family. In terms of assembly, interacts with cyclin-dependent kinases such as CDK1, CDK2 and CDK3. Does not interact with CDK4. Interacts (via C-terminus) with phosphorylated CDK2 (via C-terminal helix). Interacts with MS4A3 (via C-terminus); the interaction enhances CDKN3 enzymatic activity.

The protein localises to the cytoplasm. Its subcellular location is the perinuclear region. The enzyme catalyses O-phospho-L-tyrosyl-[protein] + H2O = L-tyrosyl-[protein] + phosphate. The catalysed reaction is O-phospho-L-seryl-[protein] + H2O = L-seryl-[protein] + phosphate. It catalyses the reaction O-phospho-L-threonyl-[protein] + H2O = L-threonyl-[protein] + phosphate. In terms of biological role, may play a role in cell cycle regulation. Dual specificity phosphatase active toward substrates containing either phosphotyrosine or phosphoserine residues. Dephosphorylates CDK2 at 'Thr-160' in a cyclin-dependent manner. This is Cyclin-dependent kinase inhibitor 3 from Mus musculus (Mouse).